The sequence spans 380 residues: MPSSWGKIFKVGTFGESHGKSVGVIVEGVPAGIPIRLEEIQKDLDRRRPGQSNLTTPRDENDTVRVVSGVFEGKTIGSPIALVVENQNTNSKDYENLRTTYRPSHADYTYQMKYGFRAHVGGGRSSVRETIGRVAAAAIARMILKDDLGIETVAWVDSIGTIQSTIGEKYPKSREEVDQNEVRCPDAVSADQMRSLILKMKEAGDSVGGTIKCVSYNLPPGLGDPVYDKLDGDLAKAILSIPACKGFEVGSGFSGTLLTGSSHNDEFYVEGGTGKVRTKTNNSGGLQGGISNGEELVIRAAFKPTSTIFKKQNTINLKGEETTLEAKGRHDPCVLPRAVPIIEAVVNLVLVDAYLYQRAINPQWFQKWARIPDYYKDLEL.

R47 is an NADP(+) binding site. FMN-binding positions include 124-126 (RSS), G288, 303-307 (KPTST), and R329.

The protein belongs to the chorismate synthase family. Homotetramer. Requires FMNH2 as cofactor.

The enzyme catalyses 5-O-(1-carboxyvinyl)-3-phosphoshikimate = chorismate + phosphate. It functions in the pathway metabolic intermediate biosynthesis; chorismate biosynthesis; chorismate from D-erythrose 4-phosphate and phosphoenolpyruvate: step 7/7. Its function is as follows. Catalyzes the anti-1,4-elimination of the C-3 phosphate and the C-6 proR hydrogen from 5-enolpyruvylshikimate-3-phosphate (EPSP) to yield chorismate, which is the branch point compound that serves as the starting substrate for the three terminal pathways of aromatic amino acid biosynthesis. This reaction introduces a second double bond into the aromatic ring system. The sequence is that of Chorismate synthase from Leptospira borgpetersenii serovar Hardjo-bovis (strain JB197).